Reading from the N-terminus, the 425-residue chain is Pectate lyase L (425 aa).

The first 25 residues, 1–25 (MKYLNCFISTGLAAFFLVNSTSVLA), serve as a signal peptide directing secretion. Residues Cys28 and Cys114 are joined by a disulfide bond. Ca(2+) is bound by residues Asp209, Asp233, Asp234, and Asp237. Lys273 (proton acceptor) is an active-site residue. Asn402, Ser413, Ala416, Asp418, and Glu423 together coordinate Ca(2+).

The protein belongs to the polysaccharide lyase 9 family. The cofactor is Ca(2+).

It localises to the secreted. The catalysed reaction is Eliminative cleavage of (1-&gt;4)-alpha-D-galacturonan to give oligosaccharides with 4-deoxy-alpha-D-galact-4-enuronosyl groups at their non-reducing ends.. It participates in glycan metabolism; pectin degradation; 2-dehydro-3-deoxy-D-gluconate from pectin: step 2/5. In terms of biological role, presents an endo-cleaving activity on polygalacturonate or partially methylated pectin. Is effective in the maceration of plant tissue, and has an important role in soft-rot disease. Is 280-fold less active against polygalacturonate than the major pectate lyase PelB. When assayed on polygalacturonate, PelL releases oligogalacturonates of different sizes; upon prolonged incubation, PelL degrades the primary products to unsaturated tetramer and pentamer in addition to unsaturated dimer and trimer. When assayed on oligogalacturonates (degrees of polymerization of 2 to 8), it preferentially forms unsaturated tetramer, and displays the highest activity on the octamer. This Dickeya dadantii (strain 3937) (Erwinia chrysanthemi (strain 3937)) protein is Pectate lyase L (pelL).